The primary structure comprises 314 residues: tRNA-cytidine(32) 2-sulfurtransferase (314 aa).

The short motif at 57–62 (SGGKDS) is the PP-loop motif element. [4Fe-4S] cluster-binding residues include C132, C135, and C223.

This sequence belongs to the TtcA family. In terms of assembly, homodimer. Requires Mg(2+) as cofactor. The cofactor is [4Fe-4S] cluster.

The protein resides in the cytoplasm. It catalyses the reaction cytidine(32) in tRNA + S-sulfanyl-L-cysteinyl-[cysteine desulfurase] + AH2 + ATP = 2-thiocytidine(32) in tRNA + L-cysteinyl-[cysteine desulfurase] + A + AMP + diphosphate + H(+). The protein operates within tRNA modification. Its function is as follows. Catalyzes the ATP-dependent 2-thiolation of cytidine in position 32 of tRNA, to form 2-thiocytidine (s(2)C32). The sulfur atoms are provided by the cysteine/cysteine desulfurase (IscS) system. The protein is tRNA-cytidine(32) 2-sulfurtransferase of Alkalilimnicola ehrlichii (strain ATCC BAA-1101 / DSM 17681 / MLHE-1).